Consider the following 137-residue polypeptide: Large ribosomal subunit protein uL16 (137 aa).

The protein belongs to the universal ribosomal protein uL16 family. Part of the 50S ribosomal subunit.

Binds 23S rRNA and is also seen to make contacts with the A and possibly P site tRNAs. The polypeptide is Large ribosomal subunit protein uL16 (Xanthomonas axonopodis pv. citri (strain 306)).